The sequence spans 391 residues: Transposase for insertion sequence element IS905 (391 aa).

Belongs to the transposase mutator family.

Functionally, required for the transposition of the insertion element. In Lactococcus lactis subsp. lactis (strain IL1403) (Streptococcus lactis), this protein is Transposase for insertion sequence element IS905 (tra905).